Consider the following 296-residue polypeptide: MNIHFKGTGVAVTTPFNGQTIDYNLFEDHLNFLINNNVEALIINGTTGEGSTLTEDEKLKTIEIAVRVAHGRVPVIAGTGTNNTQATIEHSLKAKALGVDSIMLITPYYNKTNQRGLLAHFTTIADAVELPVLLYNVPARTNMTIEQETVAALAEHPYIYGIKDATGDINYMKTLKSVVPDDFALYSGNDDAVLPFYEAGGDGVISVIANAIPAEFSDIYRTYQVNRHEAERQFNNLLPLINALSVDVNPIPIKALVAYIGYANGELRLPLVPMLEQDTKQLIELYNRIAKGSDLS.

A pyruvate-binding site is contributed by Thr-47. The active-site Proton donor/acceptor is the Tyr-135. The active-site Schiff-base intermediate with substrate is the Lys-163. Pyruvate is bound at residue Ile-205.

It belongs to the DapA family. Homotetramer; dimer of dimers.

Its subcellular location is the cytoplasm. The catalysed reaction is L-aspartate 4-semialdehyde + pyruvate = (2S,4S)-4-hydroxy-2,3,4,5-tetrahydrodipicolinate + H2O + H(+). The protein operates within amino-acid biosynthesis; L-lysine biosynthesis via DAP pathway; (S)-tetrahydrodipicolinate from L-aspartate: step 3/4. Catalyzes the condensation of (S)-aspartate-beta-semialdehyde [(S)-ASA] and pyruvate to 4-hydroxy-tetrahydrodipicolinate (HTPA). This Macrococcus caseolyticus (strain JCSC5402) (Macrococcoides caseolyticum) protein is 4-hydroxy-tetrahydrodipicolinate synthase.